A 507-amino-acid polypeptide reads, in one-letter code: Alpha-amylase 2 (507 aa).

An N-terminal signal peptide occupies residues 1 to 20 (MKFATILSTTALALSSLVAS). A disulfide bridge connects residues Cys-62 and Cys-70. A substrate-binding site is contributed by Trp-115. Residue Asn-153 participates in Ca(2+) binding. Residue His-154 participates in substrate binding. Cysteines 182 and 196 form a disulfide. The Ca(2+) site is built by Glu-194 and Asp-207. Asn-229 carries N-linked (GlcNAc...) asparagine glycosylation. Arg-236 is a substrate binding site. 3 residues coordinate Ca(2+): Asp-238, His-242, and Glu-262. Catalysis depends on Asp-238, which acts as the Nucleophile. 241 to 242 (KH) provides a ligand contact to substrate. Glu-262 (proton donor) is an active-site residue. Gly-266 contributes to the substrate binding site. The cysteines at positions 272 and 315 are disulfide-linked. 2 residues coordinate substrate: Asp-329 and Arg-376. Cys-470 and Cys-505 are joined by a disulfide.

This sequence belongs to the glycosyl hydrolase 13 family. Requires Ca(2+) as cofactor.

The enzyme catalyses Endohydrolysis of (1-&gt;4)-alpha-D-glucosidic linkages in polysaccharides containing three or more (1-&gt;4)-alpha-linked D-glucose units.. The protein is Alpha-amylase 2 (SWA2) of Schwanniomyces occidentalis (Yeast).